The sequence spans 266 residues: DNA damage-regulated autophagy modulator protein 2 (266 aa).

6 consecutive transmembrane segments (helical) span residues 8–28 (LSFL…FSYI), 53–73 (KCLF…TIYV), 88–108 (IIKL…GLSI), 118–138 (FAAH…YMFV), 160–180 (LLLV…SSVL), and 207–227 (ITTA…LTYI).

This sequence belongs to the DRAM/TMEM150 family. Expression is down-regulated in ovarian tumors (at protein level). Widely expressed with highest levels in placenta and heart. Expressed in the retina. Not detected in brain or thymus.

The protein resides in the lysosome membrane. Its subcellular location is the photoreceptor inner segment. It is found in the apical cell membrane. Plays a role in the initiation of autophagy. In the retina, might be involved in the process of photoreceptor cells renewal and recycling to preserve visual function. Induces apoptotic cell death when coexpressed with DRAM1. In Homo sapiens (Human), this protein is DNA damage-regulated autophagy modulator protein 2 (DRAM2).